We begin with the raw amino-acid sequence, 125 residues long: Large ribosomal subunit protein bL12 (125 aa).

The protein belongs to the bacterial ribosomal protein bL12 family. As to quaternary structure, homodimer. Part of the ribosomal stalk of the 50S ribosomal subunit. Forms a multimeric L10(L12)X complex, where L10 forms an elongated spine to which 2 to 4 L12 dimers bind in a sequential fashion. Binds GTP-bound translation factors.

Its function is as follows. Forms part of the ribosomal stalk which helps the ribosome interact with GTP-bound translation factors. Is thus essential for accurate translation. In Delftia acidovorans (strain DSM 14801 / SPH-1), this protein is Large ribosomal subunit protein bL12.